The primary structure comprises 289 residues: Stress response regulator protein 1 (289 aa).

Positions 77–136 are disordered; the sequence is LDCTNSEMDEEDDFEDDEDDENLGLINPLHHKSSHGQISDYSPLTPFTEPPSASLSKPSF. The segment covering 83 to 98 has biased composition (acidic residues); it reads EMDEEDDFEDDEDDEN. Positions 127 to 136 are enriched in polar residues; it reads PSASLSKPSF. A Response regulatory domain is found at 163–281; that stretch reads NFLIVDDNII…YDFVMDRIDE (119 aa). Asp214 carries the 4-aspartylphosphate modification.

Functionally, required for stress adaptation, morphogenesis and virulence. This Scheffersomyces stipitis (strain ATCC 58785 / CBS 6054 / NBRC 10063 / NRRL Y-11545) (Yeast) protein is Stress response regulator protein 1 (SRR1).